Reading from the N-terminus, the 332-residue chain is MRIGSYQLKNRIFLAPMAGITDQPFRRICTHYGAGLTFSEMMSTNPQVWHTEKSKLRLAHHQEAGINAVQIAGCDPDEMAKAAQINVEYGAEIIDINMGCPAKKVNRKMAGSALLQYPDLVKQILNKVVKSVTVPVTLKIRTGWDKDNRNCLEIAKIAEQCGIQALTIHGRTRSCMFEGEAEYDNIKAVKEQLSIPIIANGDITSAEKAKYVLDYTNADAIMIGRGSLGNPWLFRVMESLIEKDSIVLEPSLNEKCNVILQHIQELHQFYGVEKGCRIARKHVAWYLQGIQPNPVFRQAFNAITDPKEQLIALEGFFNLILMDKEKNVRTTT.

Residues 16–18 and Q70 each bind FMN; that span reads PMA. C100 (proton donor) is an active-site residue. FMN is bound by residues K139, 200-202, and 224-225; these read NGD and GR.

This sequence belongs to the Dus family. DusB subfamily. The cofactor is FMN.

The enzyme catalyses a 5,6-dihydrouridine in tRNA + NAD(+) = a uridine in tRNA + NADH + H(+). The catalysed reaction is a 5,6-dihydrouridine in tRNA + NADP(+) = a uridine in tRNA + NADPH + H(+). In terms of biological role, catalyzes the synthesis of 5,6-dihydrouridine (D), a modified base found in the D-loop of most tRNAs, via the reduction of the C5-C6 double bond in target uridines. The polypeptide is tRNA-dihydrouridine synthase B (Pasteurella multocida (strain Pm70)).